Consider the following 338-residue polypeptide: Popeye domain-containing protein 1-A (338 aa).

Residues 1–40 are Extracellular-facing; it reads MTTESIFITTLPMDFNSQFDNITIGLNDNETLCENWREIH. 2 N-linked (GlcNAc...) asparagine glycosylation sites follow: asparagine 21 and asparagine 29. Residues 41–61 form a helical membrane-spanning segment; that stretch reads HLVFHLANTCFAAGLVIPSTL. Topologically, residues 62 to 65 are cytoplasmic; sequence NLHM. The chain crosses the membrane as a helical span at residues 66–86; the sequence is LFLRGMLCLGCTFFIIWAVLF. Over 87-91 the chain is Extracellular; sequence RCALD. The chain crosses the membrane as a helical span at residues 92–112; it reads IMIWNATFLSINFMHFVYLVY. Over 113–338 the chain is Cytoplasmic; it reads KKRPIKIKKE…VGPLSHAVFC (226 aa). Positions 296 to 317 are disordered; sequence TNDNEDGLQNFLRGTSTTSSQR. Residues 307 to 317 show a composition bias toward polar residues; that stretch reads LRGTSTTSSQR.

It belongs to the popeye family. In terms of tissue distribution, expressed in the heart.

It localises to the lateral cell membrane. The protein localises to the cell junction. The protein resides in the tight junction. Its subcellular location is the membrane. Functionally, cell adhesion molecule involved in the establishment and/or maintenance of cell integrity. Plays a role in vamp3-mediated vesicular transport and recycling of different receptor molecules. May be involved in the formation and regulation of the tight junction (TJ) paracellular permeability barrier in epithelial cells. May induce primordial adhesive contact and aggregation of epithelial cells in a Ca(2+)-independent manner. May be involved in epithelial movement during corneal sheet formation and regeneration. May play a role in the regulation of cell shape and movement by modulating the Rho-GTPase activity. May also be involved in striated muscle regeneration and in the regulation of cell spreading. The polypeptide is Popeye domain-containing protein 1-A (popdc1-a) (Xenopus laevis (African clawed frog)).